The following is a 430-amino-acid chain: Dihydrolipoyllysine-residue acetyltransferase component of pyruvate dehydrogenase complex (430 aa).

In terms of domain architecture, Lipoyl-binding spans 2–77; sequence AFEFRLPDIG…VVGDVIVKID (76 aa). N6-lipoyllysine is present on lysine 43. Residues 80–122 are disordered; it reads DAEDMQFKGHDDDSSSKEEPAKEEAPAEQAPVATQTEEVDENR. Basic and acidic residues predominate over residues 84-104; the sequence is MQFKGHDDDSSSKEEPAKEEA. Residues 125–162 enclose the Peripheral subunit-binding (PSBD) domain; it reads KAMPSVRKYAREKGVNIKAVSGSGKNGRITKEDVDAYL. Residues 165 to 200 form a disordered region; that stretch reads GAPTASNESAASATSEEVAETPAAPAAVTLEGDFPE. The segment covering 166 to 193 has biased composition (low complexity); it reads APTASNESAASATSEEVAETPAAPAAVT. Residue histidine 401 is part of the active site.

Belongs to the 2-oxoacid dehydrogenase family. Forms a 24-polypeptide structural core with octahedral symmetry. (R)-lipoate is required as a cofactor.

The catalysed reaction is N(6)-[(R)-dihydrolipoyl]-L-lysyl-[protein] + acetyl-CoA = N(6)-[(R)-S(8)-acetyldihydrolipoyl]-L-lysyl-[protein] + CoA. Its function is as follows. The pyruvate dehydrogenase complex catalyzes the overall conversion of pyruvate to acetyl-CoA and CO(2). It contains multiple copies of three enzymatic components: pyruvate dehydrogenase (E1), dihydrolipoamide acetyltransferase (E2) and lipoamide dehydrogenase (E3). The polypeptide is Dihydrolipoyllysine-residue acetyltransferase component of pyruvate dehydrogenase complex (pdhC) (Staphylococcus aureus (strain COL)).